A 380-amino-acid chain; its full sequence is Opsin-2 (380 aa).

Residues 1–51 (MVNTTDFYPVPAAMAYESSVGLPLLGWNVPTEHLDLVHPHWRSFQVPNKYW) lie on the Extracellular side of the membrane. An N-linked (GlcNAc...) asparagine glycan is attached at N3. A helical transmembrane segment spans residues 52–76 (HFGLAFVYFMLMCMSSLGNGIVLWI). Topologically, residues 77 to 88 (YATTKSIRTPSN) are cytoplasmic. A helical membrane pass occupies residues 89 to 115 (MFIVNLALFDVLMLLEMPMLVVSSLFY). Residues 116 to 128 (QRPVGWELGCDIY) are Extracellular-facing. The cysteines at positions 125 and 202 are disulfide-linked. The chain crosses the membrane as a helical span at residues 129 to 148 (AALGSVAGIGSAINNAAIAF). Over 149-166 (DRYRTISCPIDGRLTQGQ) the chain is Cytoplasmic. Residues 167–191 (VLALIAGTWVWTLPFTLMPLLRIWS) form a helical membrane-spanning segment. At 192-215 (RFTAEGFLTTCSFDYLTDDEDTKV) the chain is on the extracellular side. A helical membrane pass occupies residues 216–243 (FVGCIFAWSYAFPLCLICCFYYRLIGAV). Residues 244–279 (REHEKMLRDQAKKMNVKSLQSNADTEAQSAEIRIAK) are Cytoplasmic-facing. Residues 280 to 303 (VALTIFFLFLCSWTPYAVVAMIGA) traverse the membrane as a helical segment. Residues 304–311 (FGNRAALT) are Extracellular-facing. The helical transmembrane segment at 312–336 (PLSTMIPAVTAKIVSCIDPWVYAIN) threads the bilayer. K323 carries the post-translational modification N6-(retinylidene)lysine. Over 337-380 (HPRFRAEVQKRMKWLHLGEDARSSKSDTSSTATDRTVGNVSASA) the chain is Cytoplasmic. Positions 358 to 380 (RSSKSDTSSTATDRTVGNVSASA) are disordered. Residues 362–372 (SDTSSTATDRT) are compositionally biased toward low complexity.

Belongs to the G-protein coupled receptor 1 family. Opsin subfamily. Phosphorylated on some or all of the serine and threonine residues present in the C-terminal region.

Its subcellular location is the membrane. In terms of biological role, visual pigments are the light-absorbing molecules that mediate vision. They consist of an apoprotein, opsin, covalently linked to cis-retinal. This is Opsin-2 (Lo2) from Schistocerca gregaria (Desert locust).